A 137-amino-acid polypeptide reads, in one-letter code: NADH-quinone oxidoreductase subunit A 2 (137 aa).

3 helical membrane-spanning segments follow: residues 12–32 (WGFAAFLLGVVGLLAFMLGVS), 66–86 (FYLVAMLFVIFDVEALFLFAW), and 95–115 (WAGLIEATIFIAILLAGLVYL).

It belongs to the complex I subunit 3 family. As to quaternary structure, NDH-1 is composed of 13 different subunits. Subunits NuoA, H, J, K, L, M, N constitute the membrane sector of the complex.

Its subcellular location is the cell inner membrane. The enzyme catalyses a quinone + NADH + 5 H(+)(in) = a quinol + NAD(+) + 4 H(+)(out). NDH-1 shuttles electrons from NADH, via FMN and iron-sulfur (Fe-S) centers, to quinones in the respiratory chain. The immediate electron acceptor for the enzyme in this species is believed to be ubiquinone. Couples the redox reaction to proton translocation (for every two electrons transferred, four hydrogen ions are translocated across the cytoplasmic membrane), and thus conserves the redox energy in a proton gradient. The protein is NADH-quinone oxidoreductase subunit A 2 of Pseudomonas aeruginosa (strain ATCC 15692 / DSM 22644 / CIP 104116 / JCM 14847 / LMG 12228 / 1C / PRS 101 / PAO1).